The primary structure comprises 309 residues: Probable HTH-type transcriptional regulator LtrA (309 aa).

The 61-residue stretch at 1–61 (MNLNLLPDLA…QRTTRKLRLS (61 aa)) folds into the HTH lysR-type domain. A DNA-binding region (H-T-H motif) is located at residues 21-40 (FSAVARQNGITPSAVSRSVS).

This sequence belongs to the LysR transcriptional regulatory family.

In Klebsiella pneumoniae, this protein is Probable HTH-type transcriptional regulator LtrA (ltrA).